The primary structure comprises 500 residues: Metal transporter Nramp3.1 (500 aa).

12 helical membrane passes run 51–71 (LWLFTGPGFLMCIAFLDPGNL), 79–99 (AIAGYSLLWLLLWATAMGLLV), 128–148 (MILWIMAELALIGADIQEVIG), 160–180 (VLPLWAGVIITASDCFIFLFL), 188–208 (LEAAFGILIGIMAVTFAWMFA), 234–254 (AVGVVGCIIMPHNVFLHSALV), 280–300 (AALAISFMINLFVTTIFAKGF), 322–342 (YGGGFFPILYIWGIGLLAAGQ), 370–390 (ALITRSCAIIPTIIVALVFDT), 401–421 (WLNMLQSIQIPFALIPLLCLV), 439–459 (VSWLVAALVMLINGYLLLDFF), and 467–487 (VFTTVVCAFTGAYVTFIIYLI).

The protein belongs to the NRAMP (TC 2.A.55) family. As to expression, expressed in roots, stems, buds and leaves.

It localises to the golgi apparatus. Its subcellular location is the trans-Golgi network membrane. The catalysed reaction is Mn(2+)(in) = Mn(2+)(out). The enzyme catalyses Fe(2+)(in) = Fe(2+)(out). Functionally, divalent metal transporter. Can transport manganese (Mn) and iron (Fe). Involved in the control of cell-to-cell transport of manganese (Mn) between organs and tissues to monitor Mn homeostasis. The chain is Metal transporter Nramp3.1 from Populus trichocarpa (Western balsam poplar).